The primary structure comprises 606 residues: Kelch-like protein 41 (606 aa).

Position 3 is a phosphoserine (serine 3). One can recognise a BTB domain in the interval 33–100 (IDCTLKAGDK…LYSASIDLND (68 aa)). The BACK domain maps to 135–237 (CLAILRLGLL…AEKYFKDHVE (103 aa)). Kelch repeat units follow at residues 346–398 (QVYV…EVDD), 399–447 (KIYV…SHNG), 448–495 (MIYC…IHKG), 497–542 (IVIA…SLAG), and 544–599 (LYAI…TRLN).

As to quaternary structure, interacts with NRAP. Part of a complex that contains CUL3, RBX1 and KLHL41. Interacts with LASP1. Post-translationally, ubiquitinated by E3 ubiquitin ligase complex formed by CUL3 and RBX1 and probably targeted for proteasome-independent degradation. Quinone-induced oxidative stress increases its ubiquitination. As to expression, primarily expressed in skeletal muscle. Also found in heart and lung.

The protein resides in the cytoplasm. It is found in the cytoskeleton. Its subcellular location is the cell projection. The protein localises to the pseudopodium. It localises to the ruffle. The protein resides in the myofibril. It is found in the sarcomere. Its subcellular location is the m line. The protein localises to the sarcoplasmic reticulum membrane. It localises to the endoplasmic reticulum membrane. In terms of biological role, involved in skeletal muscle development and differentiation. Regulates proliferation and differentiation of myoblasts and plays a role in myofibril assembly by promoting lateral fusion of adjacent thin fibrils into mature, wide myofibrils. Required for pseudopod elongation in transformed cells. The polypeptide is Kelch-like protein 41 (Klhl41) (Rattus norvegicus (Rat)).